A 178-amino-acid chain; its full sequence is Bifunctional protein PyrR (178 aa).

A PRPP-binding motif is present at residues 99–111; it reads IILVDDVLFTGRT.

This sequence belongs to the purine/pyrimidine phosphoribosyltransferase family. PyrR subfamily. Homodimer and homohexamer; in equilibrium.

It catalyses the reaction UMP + diphosphate = 5-phospho-alpha-D-ribose 1-diphosphate + uracil. Functionally, regulates transcriptional attenuation of the pyrimidine nucleotide (pyr) operon by binding in a uridine-dependent manner to specific sites on pyr mRNA. This disrupts an antiterminator hairpin in the RNA and favors formation of a downstream transcription terminator, leading to a reduced expression of downstream genes. In terms of biological role, also displays a weak uracil phosphoribosyltransferase activity which is not physiologically significant. The protein is Bifunctional protein PyrR of Clostridium novyi (strain NT).